Here is a 622-residue protein sequence, read N- to C-terminus: Kelch-like protein 14 (622 aa).

The BTB domain maps to cysteine 33 to leucine 145. Residues alanine 73 to lysine 108 form a disordered region. Over residues proline 87–glutamate 96 the composition is skewed to pro residues. Kelch repeat units follow at residues methionine 317–asparagine 366, phenylalanine 367–lysine 418, asparagine 419–glycine 465, isoleucine 467–aspartate 512, leucine 514–aspartate 564, and isoleucine 566–leucine 614.

It localises to the cytoplasm. It is found in the cytosol. Its subcellular location is the endoplasmic reticulum membrane. The chain is Kelch-like protein 14 (KLHL14) from Gallus gallus (Chicken).